The following is a 389-amino-acid chain: Galactokinase (389 aa).

34-37 (EHTD) lines the substrate pocket. ATP-binding positions include Ser-68 and 125–131 (GSGLSSS). Positions 131 and 163 each coordinate Mg(2+). Asp-175 (proton acceptor) is an active-site residue. Tyr-225 is a substrate binding site.

It belongs to the GHMP kinase family. GalK subfamily.

It localises to the cytoplasm. The catalysed reaction is alpha-D-galactose + ATP = alpha-D-galactose 1-phosphate + ADP + H(+). It participates in carbohydrate metabolism; galactose metabolism. Catalyzes the transfer of the gamma-phosphate of ATP to D-galactose to form alpha-D-galactose-1-phosphate (Gal-1-P). The chain is Galactokinase from Clostridium acetobutylicum (strain ATCC 824 / DSM 792 / JCM 1419 / IAM 19013 / LMG 5710 / NBRC 13948 / NRRL B-527 / VKM B-1787 / 2291 / W).